Reading from the N-terminus, the 611-residue chain is tRNA uridine 5-carboxymethylaminomethyl modification enzyme MnmG (611 aa).

FAD is bound by residues 12–17 (GGGHAG), valine 124, and serine 179. 271 to 285 (GPRYCPSVEDKIVRF) lines the NAD(+) pocket. Glutamine 368 serves as a coordination point for FAD.

It belongs to the MnmG family. As to quaternary structure, homodimer. Heterotetramer of two MnmE and two MnmG subunits. FAD is required as a cofactor.

It localises to the cytoplasm. Functionally, NAD-binding protein involved in the addition of a carboxymethylaminomethyl (cmnm) group at the wobble position (U34) of certain tRNAs, forming tRNA-cmnm(5)s(2)U34. The protein is tRNA uridine 5-carboxymethylaminomethyl modification enzyme MnmG of Mycoplasma mobile (strain ATCC 43663 / 163K / NCTC 11711) (Mesomycoplasma mobile).